Reading from the N-terminus, the 240-residue chain is Glutathione S-transferase theta-1 (240 aa).

A GST N-terminal domain is found at valine 2–aspartate 82. Residues histidine 40, arginine 53–valine 54, and glutamate 66–serine 67 contribute to the glutathione site. The region spanning aspartate 88–proline 222 is the GST C-terminal domain.

This sequence belongs to the GST superfamily. Theta family. In terms of assembly, homodimer. As to expression, in liver, highest expression found in central vein limiting plate hepatocytes. Also expressed in interlobular bile duct epithelial cells. In lung, expressed in club cells and ciliated cells of the bronchiolar epithelium and in type II alveolar cells of the lung parenchyma.

Its subcellular location is the cytoplasm. It is found in the nucleus. The enzyme catalyses RX + glutathione = an S-substituted glutathione + a halide anion + H(+). In terms of biological role, conjugation of reduced glutathione to a wide number of exogenous and endogenous hydrophobic electrophiles. Also binds steroids, bilirubin, carcinogens and numerous organic anions. Has dichloromethane dehalogenase activity. The chain is Glutathione S-transferase theta-1 (Gstt1) from Mus musculus (Mouse).